The primary structure comprises 1240 residues: Neurofascin (1240 aa).

An N-terminal signal peptide occupies residues 1 to 24 (MARQQAPPWVHIALILFLLSLGGA). The Extracellular portion of the chain corresponds to 25–1110 (IEIPMDPSIQ…NQADIATQGW (1086 aa)). Ig-like C2-type domains lie at 41–137 (PTIT…LQVS), 143–230 (PKEN…NPFT), 244–332 (PSFM…ISVR), 337–424 (PYWL…AFVS), 430–517 (PRML…VRLE), and 521–603 (PTRI…QDLA). Intrachain disulfides connect C63/C118, C162/C213, C268/C316, and C358/C408. N-linked (GlcNAc...) asparagine glycosylation occurs at N305. Residues N409 and N446 are each glycosylated (N-linked (GlcNAc...) asparagine). 2 disulfide bridges follow: C452–C501 and C543–C592. Y481 is modified (phosphotyrosine). A glycan (N-linked (GlcNAc...) asparagine) is linked at N483. Phosphoserine is present on S485. Fibronectin type-III domains are found at residues 630–725 (RPRD…TSGA), 727–823 (PESN…SGED), 827–923 (APRR…PNEA), and 1007–1099 (APDE…TAYT). Positions 710–740 (SSHPSLPSERYRTSGAPPESNPSDVKGEGTR) are disordered. N-linked (GlcNAc...) asparagine glycosylation is found at N752, N778, N866, and N881. The interval 902-942 (ARTQVGSGEAATEESPAPPNEATPTAAPPTLPPTTVGTTGL) is disordered. A compositionally biased stretch (low complexity) spans 907 to 916 (GSGEAATEES). The span at 917 to 933 (PAPPNEATPTAAPPTLP) shows a compositional bias: pro residues. A helical transmembrane segment spans residues 1111 to 1131 (FIGLMCAIALLVLILLIVCFI). At 1132 to 1240 (KRSRGGKYPV…SPVNAIYSLA (109 aa)) the chain is on the cytoplasmic side. Residues 1141–1240 (VREKKDVPLG…SPVNAIYSLA (100 aa)) are disordered. Acidic residues predominate over residues 1154–1165 (PKEEDGSFDYSD). A phosphoserine mark is found at S1160, S1174, S1187, S1190, S1226, S1227, and S1231. The segment covering 1171–1184 (LQGSQTSLDGTIKQ) has biased composition (polar residues).

It belongs to the immunoglobulin superfamily. L1/neurofascin/NgCAM family. In terms of assembly, horseshoe-shaped homodimer. Probable constituent of a NFASC/NRCAM/ankyrin-G complex. Associates with the sodium channel beta-1 (SCN1B) and beta-3 (SCN3B) subunits. Interacts with GLDN/gliomedin. Interacts with MYOC.

It is found in the cell membrane. Cell adhesion, ankyrin-binding protein which may be involved in neurite extension, axonal guidance, synaptogenesis, myelination and neuron-glial cell interactions. The sequence is that of Neurofascin (Nfasc) from Mus musculus (Mouse).